The following is a 335-amino-acid chain: Cathepsin B (335 aa).

Positions 1–17 (MWRLLATLSCLLVLTSA) are cleaved as a signal peptide. Residues 18-79 (RSSLYFPPLS…QRDAFAADVV (62 aa)) constitute a propeptide, activation peptide. Disulfide bonds link C93-C122, C105-C150, C141-C207, C142-C146, C179-C211, and C187-C198. Residue C108 is part of the active site. The N-linked (GlcNAc...) asparagine glycan is linked to N192. The residue at position 220 (K220) is an N6-acetyllysine. A disulfide bond links C227 and C331. Residues H278 and N298 contribute to the active site. Residues 333–335 (HQY) constitute a propeptide that is removed on maturation.

Belongs to the peptidase C1 family. Dimer of a heavy chain and a light chain cross-linked by a disulfide bond. Interacts with SRPX2. Directly interacts with SHKBP1. As to expression, expressed in myoblasts, the myotube, fibroblasts and fetal muscle (at protein level). Expressed in the spleen (at protein level).

The protein localises to the lysosome. Its subcellular location is the melanosome. It is found in the secreted. The protein resides in the extracellular space. It localises to the apical cell membrane. It carries out the reaction Hydrolysis of proteins with broad specificity for peptide bonds. Preferentially cleaves -Arg-Arg-|-Xaa bonds in small molecule substrates (thus differing from cathepsin L). In addition to being an endopeptidase, shows peptidyl-dipeptidase activity, liberating C-terminal dipeptides.. Thiol protease which is believed to participate in intracellular degradation and turnover of proteins. Cleaves matrix extracellular phosphoglycoprotein MEPE. Involved in the solubilization of cross-linked TG/thyroglobulin in the thyroid follicle lumen. Has also been implicated in tumor invasion and metastasis. The protein is Cathepsin B (CTSB) of Bos taurus (Bovine).